A 414-amino-acid polypeptide reads, in one-letter code: UDP-N-acetylglucosamine 1-carboxyvinyltransferase (414 aa).

19 to 20 provides a ligand contact to phosphoenolpyruvate; the sequence is KN. R89 contacts UDP-N-acetyl-alpha-D-glucosamine. The active-site Proton donor is the C113. 2-(S-cysteinyl)pyruvic acid O-phosphothioketal is present on C113. Residues 118 to 122, D301, and V323 each bind UDP-N-acetyl-alpha-D-glucosamine; that span reads RPIDL.

This sequence belongs to the EPSP synthase family. MurA subfamily.

The protein localises to the cytoplasm. It carries out the reaction phosphoenolpyruvate + UDP-N-acetyl-alpha-D-glucosamine = UDP-N-acetyl-3-O-(1-carboxyvinyl)-alpha-D-glucosamine + phosphate. The protein operates within cell wall biogenesis; peptidoglycan biosynthesis. In terms of biological role, cell wall formation. Adds enolpyruvyl to UDP-N-acetylglucosamine. The chain is UDP-N-acetylglucosamine 1-carboxyvinyltransferase from Bdellovibrio bacteriovorus (strain ATCC 15356 / DSM 50701 / NCIMB 9529 / HD100).